Here is a 232-residue protein sequence, read N- to C-terminus: tRNA (guanine-N(7)-)-methyltransferase (232 aa).

S-adenosyl-L-methionine is bound by residues glutamate 63, glutamate 88, aspartate 115, and aspartate 137. Aspartate 137 is a catalytic residue. Substrate is bound by residues lysine 141, aspartate 173, and 211-214 (TRYE).

It belongs to the class I-like SAM-binding methyltransferase superfamily. TrmB family.

The catalysed reaction is guanosine(46) in tRNA + S-adenosyl-L-methionine = N(7)-methylguanosine(46) in tRNA + S-adenosyl-L-homocysteine. It functions in the pathway tRNA modification; N(7)-methylguanine-tRNA biosynthesis. Functionally, catalyzes the formation of N(7)-methylguanine at position 46 (m7G46) in tRNA. In Rhizobium meliloti (strain 1021) (Ensifer meliloti), this protein is tRNA (guanine-N(7)-)-methyltransferase.